The sequence spans 128 residues: MKLAAIDVGLKRIGTAICLDGRIVMPQNAILRKNRNQAAHDVVSFLEEWEIEKLVVGLPKGGSSSEEMERRIQHFVSLLELDIPVVYQDEQGSSFEAKEMTQGQFRHKKDGKIDSIAAKIILERHLSL.

This sequence belongs to the YqgF nuclease family.

It localises to the cytoplasm. Its function is as follows. Could be a nuclease involved in processing of the 5'-end of pre-16S rRNA. The sequence is that of Putative pre-16S rRNA nuclease from Sulfurovum sp. (strain NBC37-1).